The sequence spans 225 residues: Uridylate kinase (225 aa).

9 to 10 (GS) serves as a coordination point for ATP. G46 lines the UMP pocket. ATP contacts are provided by G47 and R51. UMP-binding positions include D67 and 115 to 121 (THPAHTT). Positions 141, 142, 147, and 150 each coordinate ATP.

Belongs to the UMP kinase family. As to quaternary structure, homohexamer.

The protein resides in the cytoplasm. The enzyme catalyses UMP + ATP = UDP + ADP. It participates in pyrimidine metabolism; CTP biosynthesis via de novo pathway; UDP from UMP (UMPK route): step 1/1. With respect to regulation, inhibited by UTP. Its function is as follows. Catalyzes the reversible phosphorylation of UMP to UDP. The chain is Uridylate kinase from Methanococcus maripaludis (strain DSM 14266 / JCM 13030 / NBRC 101832 / S2 / LL).